The chain runs to 518 residues: Membrane-bound lytic murein transglycosylase F (518 aa).

The first 21 residues, 1–21, serve as a signal peptide directing secretion; sequence MKKLKINYLFIGILALLLAVA. The interval 22-269 is non-LT domain; sequence LWPSIPWFGK…RIEEKYLGHG (248 aa). Residues 270 to 518 form an LT domain region; it reads DDFDYVDTRT…SRKGSEEKQN (249 aa). Glutamate 314 is an active-site residue.

In the N-terminal section; belongs to the bacterial solute-binding protein 3 family. It in the C-terminal section; belongs to the transglycosylase Slt family.

Its subcellular location is the cell outer membrane. The enzyme catalyses Exolytic cleavage of the (1-&gt;4)-beta-glycosidic linkage between N-acetylmuramic acid (MurNAc) and N-acetylglucosamine (GlcNAc) residues in peptidoglycan, from either the reducing or the non-reducing ends of the peptidoglycan chains, with concomitant formation of a 1,6-anhydrobond in the MurNAc residue.. In terms of biological role, murein-degrading enzyme that degrades murein glycan strands and insoluble, high-molecular weight murein sacculi, with the concomitant formation of a 1,6-anhydromuramoyl product. Lytic transglycosylases (LTs) play an integral role in the metabolism of the peptidoglycan (PG) sacculus. Their lytic action creates space within the PG sacculus to allow for its expansion as well as for the insertion of various structures such as secretion systems and flagella. The protein is Membrane-bound lytic murein transglycosylase F of Shigella boydii serotype 18 (strain CDC 3083-94 / BS512).